A 519-amino-acid polypeptide reads, in one-letter code: 2-isopropylmalate synthase (519 aa).

The Pyruvate carboxyltransferase domain occupies 5 to 267 (VIIFDTTLRD…YTNIHHHEIY (263 aa)). Mn(2+) is bound by residues Asp14, His202, His204, and Asn238. The segment at 392–519 (ALESFHIHST…NHKNTQHIKK (128 aa)) is regulatory domain.

Belongs to the alpha-IPM synthase/homocitrate synthase family. LeuA type 1 subfamily. Homodimer. It depends on Mn(2+) as a cofactor.

The protein resides in the cytoplasm. The catalysed reaction is 3-methyl-2-oxobutanoate + acetyl-CoA + H2O = (2S)-2-isopropylmalate + CoA + H(+). Its pathway is amino-acid biosynthesis; L-leucine biosynthesis; L-leucine from 3-methyl-2-oxobutanoate: step 1/4. Its function is as follows. Catalyzes the condensation of the acetyl group of acetyl-CoA with 3-methyl-2-oxobutanoate (2-ketoisovalerate) to form 3-carboxy-3-hydroxy-4-methylpentanoate (2-isopropylmalate). In Blochmanniella floridana, this protein is 2-isopropylmalate synthase.